An 82-amino-acid polypeptide reads, in one-letter code: Putative antitoxin Saci_0468 (82 aa).

Belongs to the UPF0330 family.

Possibly the antitoxin component of a type II toxin-antitoxin (TA) system. This is Putative antitoxin Saci_0468 from Sulfolobus acidocaldarius (strain ATCC 33909 / DSM 639 / JCM 8929 / NBRC 15157 / NCIMB 11770).